A 212-amino-acid polypeptide reads, in one-letter code: Methylthioribulose-1-phosphate dehydratase (212 aa).

H97 and H99 together coordinate Zn(2+).

This sequence belongs to the aldolase class II family. MtnB subfamily. Homotetramer. Requires Zn(2+) as cofactor.

The enzyme catalyses 5-(methylsulfanyl)-D-ribulose 1-phosphate = 5-methylsulfanyl-2,3-dioxopentyl phosphate + H2O. Its pathway is amino-acid biosynthesis; L-methionine biosynthesis via salvage pathway; L-methionine from S-methyl-5-thio-alpha-D-ribose 1-phosphate: step 2/6. Functionally, catalyzes the dehydration of methylthioribulose-1-phosphate (MTRu-1-P) into 2,3-diketo-5-methylthiopentyl-1-phosphate (DK-MTP-1-P). The polypeptide is Methylthioribulose-1-phosphate dehydratase (Bacillus cereus (strain B4264)).